The sequence spans 906 residues: Translation initiation factor IF-2 (906 aa).

Disordered regions lie at residues 94–125 (APEK…PETA), 165–232 (ESEA…TGKK), and 270–321 (RQEQ…SSEV). 3 stretches are compositionally biased toward basic and acidic residues: residues 165–176 (ESEAEKGTEIEK), 222–232 (GPAEARETGKK), and 270–284 (RQEQ…KREA). Residues 299 to 313 (QQRRSLKRGGKRKKY) are compositionally biased toward basic residues. Positions 405–574 (ERPPVITIMG…LLQAEMMELK (170 aa)) constitute a tr-type G domain. Residues 414-421 (GHVDHGKT) are G1. A GTP-binding site is contributed by 414–421 (GHVDHGKT). Residues 439–443 (GITQH) form a G2 region. A G3 region spans residues 460-463 (DTPG). Residues 460–464 (DTPGH) and 514–517 (NKMD) each bind GTP. Residues 514–517 (NKMD) are G4. The G5 stretch occupies residues 550 to 552 (SAH).

It belongs to the TRAFAC class translation factor GTPase superfamily. Classic translation factor GTPase family. IF-2 subfamily.

It is found in the cytoplasm. In terms of biological role, one of the essential components for the initiation of protein synthesis. Protects formylmethionyl-tRNA from spontaneous hydrolysis and promotes its binding to the 30S ribosomal subunits. Also involved in the hydrolysis of GTP during the formation of the 70S ribosomal complex. The sequence is that of Translation initiation factor IF-2 from Sulfurovum sp. (strain NBC37-1).